The following is a 191-amino-acid chain: Imidazoleglycerol-phosphate dehydratase (191 aa).

This sequence belongs to the imidazoleglycerol-phosphate dehydratase family.

The protein localises to the cytoplasm. The catalysed reaction is D-erythro-1-(imidazol-4-yl)glycerol 3-phosphate = 3-(imidazol-4-yl)-2-oxopropyl phosphate + H2O. It participates in amino-acid biosynthesis; L-histidine biosynthesis; L-histidine from 5-phospho-alpha-D-ribose 1-diphosphate: step 6/9. This chain is Imidazoleglycerol-phosphate dehydratase, found in Methanosarcina mazei (strain ATCC BAA-159 / DSM 3647 / Goe1 / Go1 / JCM 11833 / OCM 88) (Methanosarcina frisia).